Reading from the N-terminus, the 266-residue chain is Type 1 encapsulin shell protein (266 aa).

This sequence belongs to the encapsulin family. Family 1 subfamily. In terms of assembly, this encapsulin nanocompartment is formed by 60 subunits; monomers form 12 pentamers which assemble to form shells. Shells are loaded with 4 encapsulated ferritin-like protein decamers (EncFtn) in a tetrahedral arrangement. A 3 nm gap is consistently seen between the shell and the cargo.

It localises to the encapsulin nanocompartment. Its function is as follows. Shell component of a type 1 encapsulin nanocompartment. Assembles into proteinaceous shells about 21 nm in diameter. Small pores form at, or close to, the 2-, 3-, and 5-fold symmetry axes. Data analysis suggests the 5-fold pores open and close with maximal and minimal aperatures of 15 and 5 Angstroms. Cargo protein Fer (ferritin-like protein, probably stores iron) is targeted to the interior via its C-terminal extension; empty intact shells can be isolated in the absence of cargo protein. This is Type 1 encapsulin shell protein from Haliangium ochraceum (strain DSM 14365 / JCM 11303 / SMP-2).